A 116-amino-acid chain; its full sequence is NADH-ubiquinone oxidoreductase chain 3 (116 aa).

3 helical membrane passes run 3–23 (LFAT…LVSF), 56–76 (FFLV…LLPL), and 88–108 (TLFW…YEWA).

The protein belongs to the complex I subunit 3 family. Core subunit of respiratory chain NADH dehydrogenase (Complex I) which is composed of 45 different subunits.

The protein localises to the mitochondrion inner membrane. The enzyme catalyses a ubiquinone + NADH + 5 H(+)(in) = a ubiquinol + NAD(+) + 4 H(+)(out). Its function is as follows. Core subunit of the mitochondrial membrane respiratory chain NADH dehydrogenase (Complex I) which catalyzes electron transfer from NADH through the respiratory chain, using ubiquinone as an electron acceptor. Essential for the catalytic activity of complex I. This Danio rerio (Zebrafish) protein is NADH-ubiquinone oxidoreductase chain 3 (mt-nd3).